A 326-amino-acid polypeptide reads, in one-letter code: tRNA-modifying protein YgfZ (326 aa).

Residues Trp-27 and Trp-189 each contribute to the folate site.

This sequence belongs to the tRNA-modifying YgfZ family.

The protein resides in the cytoplasm. In terms of biological role, folate-binding protein involved in regulating the level of ATP-DnaA and in the modification of some tRNAs. It is probably a key factor in regulatory networks that act via tRNA modification, such as initiation of chromosomal replication. The chain is tRNA-modifying protein YgfZ from Shigella sonnei (strain Ss046).